The following is a 202-amino-acid chain: Rho GDP-dissociation inhibitor (202 aa).

N-acetylalanine is present on Ala-2. Thr-27 is modified (phosphothreonine). Residue Ser-40 is modified to Phosphoserine.

The protein belongs to the Rho GDI family.

The protein resides in the cytoplasm. Functionally, regulates the GDP/GTP exchange reaction of the Rho proteins by inhibiting the dissociation of GDP from them, and the subsequent binding of GTP to them. The sequence is that of Rho GDP-dissociation inhibitor (RDI1) from Saccharomyces cerevisiae (strain ATCC 204508 / S288c) (Baker's yeast).